Here is a 1429-residue protein sequence, read N- to C-terminus: Nitric oxide synthase 1 (1429 aa).

The segment at 1–200 (MEEHTFGVQQ…LQDSGEQDEL (200 aa)) is interaction with NOSIP. The PDZ domain occupies 17 to 99 (SVRLFKRKVG…ETHVVLILRG (83 aa)). 2 disordered regions span residues 114 to 174 (DGTP…SVSQ) and 271 to 298 (NNPY…SRCP). Positions 163 to 240 (QGRGQGAGSV…TGIQVDRDLD (78 aa)) are interaction with DYNLL1/PIN. Polar residues predominate over residues 272 to 294 (NPYSENEQSPASGKQSPTKNGSP). At S280 the chain carries Phosphoserine. S334 is a binding site for (6R)-L-erythro-5,6,7,8-tetrahydrobiopterin. C415 is a binding site for heme b. Q478, W587, Y588, and E592 together coordinate L-arginine. (6R)-L-erythro-5,6,7,8-tetrahydrobiopterin-binding residues include V677, W678, and F691. Y706 contributes to the heme b binding site. A calmodulin-binding region spans residues 725–745 (KRRAIGFKKLAEAVKFSAKLM). In terms of domain architecture, Flavodoxin-like spans 755–935 (ATILYATETG…AFRTWAKKVF (181 aa)). FMN is bound by residues T761, E762, T763, K765, S766, S807, T808, and G812. A phosphoserine mark is found at S847, S857, and S858. Residues S886, H891, C893, E919, and Q923 each contribute to the FMN site. One can recognise an FAD-binding FR-type domain in the interval 990-1237 (KRVSAARLLS…VRGAPSFHLP (248 aa)). Residue R1010 participates in NADP(+) binding. The FAD site is built by H1032, R1173, Y1174, Y1175, S1176, T1191, and A1193. S1196 serves as a coordination point for NADP(+). FAD-binding residues include Y1197, V1210, C1211, and S1212. NADP(+) contacts are provided by T1251, R1284, S1313, R1314, K1320, Y1322, Q1324, D1357, T1398, and R1400.

It belongs to the NOS family. As to quaternary structure, homodimer. Interacts with DLG4; the interaction possibly being prevented by the association between NOS1 and CAPON. Forms a ternary complex with CAPON and RASD1. Forms a ternary complex with CAPON and SYN1. Interacts with ZDHHC23. Interacts with NOSIP; which may impair its synaptic location. Interacts with HTR4. Interacts with VAC14. Interacts (via N-terminal domain) with DLG4 (via N-terminal tandem pair of PDZ domains). Interacts with SLC6A4. Forms a complex with ASL, ASS1 and SLC7A1; the complex regulates cell-autonomous L-arginine synthesis and citrulline recycling while channeling extracellular L-arginine to nitric oxide synthesis pathway. Interacts with DMD; localizes NOS1 to sarcolemma in muscle cells. Interacts with DYNLL1; inhibits the nitric oxide synthase activity. It depends on heme b as a cofactor. FAD is required as a cofactor. The cofactor is FMN. Requires (6R)-L-erythro-5,6,7,8-tetrahydrobiopterin as cofactor. Post-translationally, ubiquitinated; mediated by STUB1/CHIP in the presence of Hsp70 and Hsp40 (in vitro). Widely expressed in the nervous system: expressed in cerebrum, olfactory bulb, hippocampus, midbrain, cerebellum, pons, medulla oblongata, and spinal cord. Also found in skeletal muscle, where it is localized beneath the sarcolemma of fast twitch muscle fibers, and in spleen, heart, kidney, and liver. N-NOS-1 and N-NOS-2 are found in all parts of the nervous system. NNOS beta and gamma occur in a region-specific manner in the brain and NNOS beta expression is developmentally regulated. NNOS Mu is only found in mature skeletal and cardiac muscles.

Its subcellular location is the cell membrane. It is found in the sarcolemma. The protein localises to the cell projection. The protein resides in the dendritic spine. The catalysed reaction is 2 L-arginine + 3 NADPH + 4 O2 + H(+) = 2 L-citrulline + 2 nitric oxide + 3 NADP(+) + 4 H2O. Its activity is regulated as follows. Stimulated by calcium/calmodulin. Inhibited by DYNLL1 that prevents the dimerization of the protein. Inhibited by NOSIP. Produces nitric oxide (NO) which is a messenger molecule with diverse functions throughout the body. In the brain and peripheral nervous system, NO displays many properties of a neurotransmitter. Probably has nitrosylase activity and mediates cysteine S-nitrosylation of cytoplasmic target proteins such SRR. Isoform NNOS Mu may be an effector enzyme for the dystrophin complex. This chain is Nitric oxide synthase 1, found in Mus musculus (Mouse).